The following is a 227-amino-acid chain: Acyl-protein thioesterase 1 (227 aa).

Catalysis depends on charge relay system residues serine 119, aspartate 173, and histidine 207.

It belongs to the AB hydrolase superfamily. AB hydrolase 2 family.

It localises to the cytoplasm. Its subcellular location is the nucleus. It catalyses the reaction S-hexadecanoyl-L-cysteinyl-[protein] + H2O = L-cysteinyl-[protein] + hexadecanoate + H(+). Its function is as follows. Hydrolyzes fatty acids from S-acylated cysteine residues in proteins with a strong preference for palmitoylated G-alpha proteins over other acyl substrates. Mediates the deacylation of G-alpha proteins such as GPA1 in vivo, but has weak or no activity toward palmitoylated Ras proteins. Has weak lysophospholipase activity in vitro; however such activity may not exist in vivo. This Yarrowia lipolytica (strain CLIB 122 / E 150) (Yeast) protein is Acyl-protein thioesterase 1.